The primary structure comprises 239 residues: Fatty acid metabolism regulator protein (239 aa).

In terms of domain architecture, HTH gntR-type spans Q6–F74. A DNA-binding region (H-T-H motif) is located at residues E34 to Q53.

As to quaternary structure, homodimer.

It localises to the cytoplasm. Functionally, multifunctional regulator of fatty acid metabolism. Represses transcription of at least eight genes required for fatty acid transport and beta-oxidation including fadA, fadB, fadD, fadL and fadE. Activates transcription of at least three genes required for unsaturated fatty acid biosynthesis: fabA, fabB and iclR, the gene encoding the transcriptional regulator of the aceBAK operon encoding the glyoxylate shunt enzymes. Binding of FadR is specifically inhibited by long chain fatty acyl-CoA compounds. The chain is Fatty acid metabolism regulator protein from Salmonella typhimurium (strain LT2 / SGSC1412 / ATCC 700720).